The chain runs to 362 residues: Terpene synthase 3 (362 aa).

The short motif at aspartate 90 to arginine 95 is the DDxx(x)D/E motif element. The short motif at asparagine 239 to glutamate 247 is the NDxxSxxxD/E motif element.

It belongs to the terpene synthase family.

It carries out the reaction (2E,6E)-farnesyl diphosphate = beta-maaliene + diphosphate. The catalysed reaction is (2E,6E)-farnesyl diphosphate = aristolene + diphosphate. The enzyme catalyses (2E,6E)-farnesyl diphosphate = calarene + diphosphate. It catalyses the reaction (2E)-geranyl diphosphate = (E)-beta-ocimene + diphosphate. It carries out the reaction (2E)-geranyl diphosphate = (Z)-beta-ocimene + diphosphate. The catalysed reaction is (2E)-geranyl diphosphate + H2O = linalool + diphosphate. The enzyme catalyses (2E)-geranyl diphosphate = beta-myrcene + diphosphate. Functionally, terpene synthase that converts its substrate farnesyl diphosphate (FPP) into an unidentified sesquiterpene as a major product, as well as beta-maaliene, aristolene, calarene and 2 additional unidentified sesquiterpene as minor products. Is also able to convert geranyl diphosphate (GPP) into a mixture of monoterpenes including (Z)-beta-ocimene, (E)-beta-ocimene, allo-ocimene, linalool and beta-myrcene. The protein is Terpene synthase 3 of Dictyostelium discoideum (Social amoeba).